Consider the following 100-residue polypeptide: Elicitin Vex2 (100 aa).

3 disulfides stabilise this stretch: Cys-3-Cys-71, Cys-27-Cys-56, and Cys-51-Cys-95.

It belongs to the elicitin family.

Its subcellular location is the secreted. In terms of biological role, induces local and distal defense responses (incompatible hypersensitive reaction) in plants from the solanaceae and cruciferae families. Elicits leaf necrosis and causes the accumulation of pathogenesis-related proteins. Might interact with the lipidic molecules of the plasma membrane. The polypeptide is Elicitin Vex2 (Phytopythium vexans (Damping-off fungus)).